A 568-amino-acid chain; its full sequence is Urease subunit alpha (568 aa).

Positions Gly133–Leu568 constitute a Urease domain. Ni(2+) is bound by residues His138, His140, and Lys217. Residue Lys217 is modified to N6-carboxylysine. His219 lines the substrate pocket. His246 and His272 together coordinate Ni(2+). The active-site Proton donor is His320. Asp360 lines the Ni(2+) pocket.

This sequence belongs to the metallo-dependent hydrolases superfamily. Urease alpha subunit family. Heterotrimer of UreA (gamma), UreB (beta) and UreC (alpha) subunits. Three heterotrimers associate to form the active enzyme. It depends on Ni cation as a cofactor. In terms of processing, carboxylation allows a single lysine to coordinate two nickel ions.

The protein resides in the cytoplasm. It catalyses the reaction urea + 2 H2O + H(+) = hydrogencarbonate + 2 NH4(+). It participates in nitrogen metabolism; urea degradation; CO(2) and NH(3) from urea (urease route): step 1/1. This chain is Urease subunit alpha, found in Haloarcula marismortui (strain ATCC 43049 / DSM 3752 / JCM 8966 / VKM B-1809) (Halobacterium marismortui).